Here is a 1032-residue protein sequence, read N- to C-terminus: Probable LRR receptor-like serine/threonine-protein kinase At1g56130 (1032 aa).

The first 29 residues, 1 to 29 (MTRIRRSPCLLLLIIWFMCIAGSVQVVQS), serve as a signal peptide directing secretion. Topologically, residues 30 to 636 (QNQTGATTHP…PPSKGKNRTG (607 aa)) are extracellular. N-linked (GlcNAc...) asparagine glycosylation is found at asparagine 31, asparagine 61, and asparagine 95. LRR repeat units follow at residues 101-122 (ITNIKVYAIDVVGPIPPELWTL), 123-146 (TYLTNLNLGQNVLTGSLPPAIGNL), 148-170 (RMQWMTFGINALSGPVPKEIGLL), 171-194 (TDLRLLGISSNNFSGSIPDEIGRC), 196-217 (KLQQMYIDSSGLSGRIPLSFAN), 242-265 (WTKLTTLRIIGTGLSGPIPSSFSN), 290-314 (MKSLSVLVLRNNNLTGTIPSTIGEH), 315-338 (SSLRQVDLSFNKLHGPIPASLFNL), 340-360 (QLTHLFLGNNTLNGSFPTQKT), and 361-385 (QSLRNVDVSYNDLSGSLPSWVSLPS). Asparagine 145 is a glycosylation site (N-linked (GlcNAc...) asparagine). The N-linked (GlcNAc...) asparagine glycan is linked to asparagine 182. 5 N-linked (GlcNAc...) asparagine glycosylation sites follow: asparagine 265, asparagine 302, asparagine 337, asparagine 348, and asparagine 352. Residues asparagine 394, asparagine 580, and asparagine 633 are each glycosylated (N-linked (GlcNAc...) asparagine). The helical transmembrane segment at 637–657 (TIVGVIVGVGLLSILAGVVMF) threads the bilayer. The Cytoplasmic segment spans residues 658–1032 (TIRKRRKRYT…MLGSKINEGR (375 aa)). Phosphothreonine is present on threonine 683. The region spanning 694 to 968 (FDPSNKLGEG…VAMLSGDVEI (275 aa)) is the Protein kinase domain. Residues 700–708 (LGEGGFGPV) and lysine 722 each bind ATP. Tyrosine 767 carries the post-translational modification Phosphotyrosine. Residue aspartate 818 is the Proton acceptor of the active site. Phosphoserine occurs at positions 822 and 851. 2 positions are modified to phosphothreonine: threonine 852 and threonine 857. Residue tyrosine 865 is modified to Phosphotyrosine. Residues 1008-1032 (APGSEISPRDSDFKPMLGSKINEGR) are disordered.

The protein belongs to the protein kinase superfamily. Ser/Thr protein kinase family.

It localises to the cell membrane. The catalysed reaction is L-seryl-[protein] + ATP = O-phospho-L-seryl-[protein] + ADP + H(+). It carries out the reaction L-threonyl-[protein] + ATP = O-phospho-L-threonyl-[protein] + ADP + H(+). The polypeptide is Probable LRR receptor-like serine/threonine-protein kinase At1g56130 (Arabidopsis thaliana (Mouse-ear cress)).